Reading from the N-terminus, the 76-residue chain is Large ribosomal subunit protein eL20 (76 aa).

The protein belongs to the eukaryotic ribosomal protein eL20 family. In terms of assembly, part of the 50S ribosomal subunit. Binds 23S rRNA.

The polypeptide is Large ribosomal subunit protein eL20 (Methanococcus vannielii (strain ATCC 35089 / DSM 1224 / JCM 13029 / OCM 148 / SB)).